A 487-amino-acid polypeptide reads, in one-letter code: MRFSLSTTGLQDWNGDVLVVGLLQDQPATDLEARFPGLGAALAQQQFKGKPSEQLLINRLGNNGPQRLVVLGLGPANAFNLDGVRSAAARAAKAASGHTGSLGLQLSWDGLEPTAAAAAAAEAARLALYADQRFRKAPEPRRQPEALELIGLPATAAAGLQTVDATCAGVELARELVAAPPNVVTPAALAETAAELARNHGLELTVLERADCEARGMGAFLCVSQGSDLDPKLIHLIYRPDGEVKRRVALVGKGLTFDSGGYNLKVGAAQIDMMKFDMGGSAAVLGAMRSIAERKPAGVEVHMIVASCENMINGSAVHPGDIVTAADGTTIEINNTDAEGRLTLADALLYASEQKPDAVVDLATLTGACVIALGDEMAGLWSNNDGLATALQQAADAGGEGLWRMPLRASYKEGLKSKLADFKNTGPRPGGSITAALFLEHFVGDGIAWAHIDIAGTVWSDKGRGLDPAGATGYGVRTLANWICNPE.

Residues lysine 253 and aspartate 258 each contribute to the Mn(2+) site. The active site involves lysine 265. Mn(2+) contacts are provided by aspartate 277, aspartate 337, and glutamate 339. The active site involves arginine 341.

Belongs to the peptidase M17 family. Requires Mn(2+) as cofactor.

The protein resides in the cytoplasm. It carries out the reaction Release of an N-terminal amino acid, Xaa-|-Yaa-, in which Xaa is preferably Leu, but may be other amino acids including Pro although not Arg or Lys, and Yaa may be Pro. Amino acid amides and methyl esters are also readily hydrolyzed, but rates on arylamides are exceedingly low.. The catalysed reaction is Release of an N-terminal amino acid, preferentially leucine, but not glutamic or aspartic acids.. Presumably involved in the processing and regular turnover of intracellular proteins. Catalyzes the removal of unsubstituted N-terminal amino acids from various peptides. The polypeptide is Probable cytosol aminopeptidase (Parasynechococcus marenigrum (strain WH8102)).